The sequence spans 296 residues: Ribosomal RNA small subunit methyltransferase H (296 aa).

S-adenosyl-L-methionine contacts are provided by residues 38-40 (GVH), Glu-57, Phe-88, Asp-103, and His-110.

Belongs to the methyltransferase superfamily. RsmH family.

The protein localises to the cytoplasm. It carries out the reaction cytidine(1402) in 16S rRNA + S-adenosyl-L-methionine = N(4)-methylcytidine(1402) in 16S rRNA + S-adenosyl-L-homocysteine + H(+). Specifically methylates the N4 position of cytidine in position 1402 (C1402) of 16S rRNA. The chain is Ribosomal RNA small subunit methyltransferase H from Borreliella burgdorferi (strain ZS7) (Borrelia burgdorferi).